Reading from the N-terminus, the 3080-residue chain is Protein PIEZO homolog (3080 aa).

A run of 6 helical transmembrane segments spans residues 28–48, 57–77, 86–106, 113–133, 204–224, and 232–252; these read YIYFIFFLLSILCLPHKSLIL, PIITLVLSMFSLILQLLVNVV, LSVNILTAFGFYKYNSFWIVF, VIVFVISLFTIILWFKNLVYP, YPSIINVIYFVFTILIILLLA, and VMLKCYPILLITSLCHLLFVY. N276 is a glycosylation site (N-linked (GlcNAc...) asparagine). A helical transmembrane segment spans residues 285-305; it reads WPLVIGYITVLLLYISTCILF. N-linked (GlcNAc...) asparagine glycosylation is found at N312 and N339. A run of 2 helical transmembrane segments spans residues 362-382 and 396-416; these read ILVVCFFLTASVASAILLASG and VIYIILLYFLVFISAQYIFNI. A glycan (N-linked (GlcNAc...) asparagine) is linked at N434. Residues 438–458 form a helical membrane-spanning segment; it reads WLYIGVQIVVSLTLSLYCFYS. Residues 469–548 form a disordered region; sequence KKDQQSQQSQ…GGGIIRPRKP (80 aa). The segment covering 473 to 505 has biased composition (low complexity); the sequence is QSQQSQPQPQQQQQQQQSSQNNQIQQSPLQYQQ. The segment covering 512–532 has biased composition (polar residues); it reads ISNKSLPSSPMSTKSTTVHIQ. Residues N514, N567, and N606 are each glycosylated (N-linked (GlcNAc...) asparagine). A run of 3 helical transmembrane segments spans residues 672–692, 700–720, and 740–760; these read GLTSINLLNAGYMLFFIVFVI, FWMCLIIYAQMVLLTLYIWQL, and YGSPLWVGLIWHIIIITFSII. N795 is a glycosylation site (N-linked (GlcNAc...) asparagine). A run of 3 helical transmembrane segments spans residues 827-847, 849-869, and 872-892; these read FCYLVIVIVSIFTKISLINIV, MATVFLCLLIHHISANGSIHI, and FWIIIILSQGVVLVARYIMQF. An N-linked (GlcNAc...) asparagine glycan is attached at N918. A helical membrane pass occupies residues 928 to 948; it reads LFGCSSILVVCVFQLTVFFSI. N992 is a glycosylation site (N-linked (GlcNAc...) asparagine). 2 helical membrane passes run 1036–1056 and 1067–1087; these read FAISIAEYNFFNFIYLIMIVI and IGSFLLFYSQLWVLTQLAALL. N-linked (GlcNAc...) asparagine glycosylation is present at N1109. A disordered region spans residues 1158-1185; the sequence is QQQRKLEEHEEEYEEEEDQFGNKKNNDK. The span at 1166-1176 shows a compositional bias: acidic residues; sequence HEEEYEEEEDQ. N1191, N1240, and N1251 each carry an N-linked (GlcNAc...) asparagine glycan. A disordered region spans residues 1199-1253; it reads DDGNNNNNNNNNNNNNNNNNNNNNNNNNNNNNNNNNNNNNNNQSNNENNENNNNS. Residues 1202–1252 show a composition bias toward low complexity; it reads NNNNNNNNNNNNNNNNNNNNNNNNNNNNNNNNNNNNNNNQSNNENNENNNN. The next 3 helical transmembrane spans lie at 1281–1301, 1316–1336, and 1360–1380; these read VLAFALFWRLNILGMIYLIII, IYVSALLAPTILIQYLLILVV, and LLLLSIPDRYVLVIDFLVLFF. N-linked (GlcNAc...) asparagine glycosylation is found at N1424 and N1440. The next 2 helical transmembrane spans lie at 1472–1492 and 1519–1539; these read VILIVIFLAGTAECDILSCFY and IYNWLVLMAQIIFQVAVILYF. Residues N1559 and N1589 are each glycosylated (N-linked (GlcNAc...) asparagine). The helical transmembrane segment at 1619–1639 threads the bilayer; sequence IETGPLSISTISDVIIMVLLA. Over residues 1704-1714 the composition is skewed to basic residues; that stretch reads RINRRKNRHNH. Residues 1704–1812 form a disordered region; the sequence is RINRRKNRHN…NPLSNSSSTV (109 aa). The segment covering 1715–1742 has biased composition (low complexity); that stretch reads YYNNNPNNNYNNNNNNNNSNSSNSNNNN. Residues N1731, N1734, N1763, N1768, N1771, N1779, N1807, and N1864 are each glycosylated (N-linked (GlcNAc...) asparagine). Over residues 1762-1782 the composition is skewed to polar residues; that stretch reads KNTTNQNATNSTYSPFANSTM. A compositionally biased stretch (low complexity) spans 1789-1812; that stretch reads NNNNNNNNNNNFNNNPLSNSSSTV. Disordered regions lie at residues 1873–1899 and 1958–2032; these read LQQEQQQQQEQQQQLNPQQQQSQSSKE and SQLL…TSSS. Residues 1958–2021 show a composition bias toward low complexity; it reads SQLLQQQQQQ…NNNNNNNNNN (64 aa). N-linked (GlcNAc...) asparagine glycosylation is present at N2027. A run of 2 helical transmembrane segments spans residues 2078–2098 and 2112–2132; these read IANGVFYNSIISLVYLLAVFL and FWRFMIGYSSLIICLKYVFQI. An N-linked (GlcNAc...) asparagine glycan is attached at N2148. The chain crosses the membrane as a helical span at residues 2199–2219; sequence VFGLYIIDGHFISGAFWDLAI. The disordered stretch occupies residues 2277–2367; sequence LNNSPISLNS…NNNNNNNNNN (91 aa). N-linked (GlcNAc...) asparagine glycosylation occurs at N2285. Residues 2288–2367 show a composition bias toward low complexity; sequence NNNNNNNNNN…NNNNNNNNNN (80 aa). 2 helical membrane-spanning segments follow: residues 2427-2447 and 2457-2477; these read IIIYPFKWLFVSIIEYVWLAI and YYMPLLFTDFACLFFLVIFPQ. N2478 carries N-linked (GlcNAc...) asparagine glycosylation. Helical transmembrane passes span 2500–2520, 2530–2550, 2553–2573, and 2671–2691; these read YIVILLAQFGVIILDRIIYLY, QIVLTVLYHVFLFFYFPDLIV, FSFGYTWPLVVFYLMKCIYLY, and FVTGVTFFIGLVILLWFPLII. N-linked (GlcNAc...) asparagine glycosylation is found at N2762, N2790, N2837, N2840, N2848, N2858, N2908, N2913, and N2935. The segment at 2835–2863 is disordered; that stretch reads QSNNSNNSNNPNENSSSGSDDNNNNSNNN. Positions 2836–2863 are enriched in low complexity; that stretch reads SNNSNNSNNPNENSSSGSDDNNNNSNNN. Residues 2955–2975 traverse the membrane as a helical segment; that stretch reads ITSTLVSAGIIGLYVSVVLSV. Positions 3054–3080 are disordered; that stretch reads PTINSTLNNQNNQNNNNNNNNNHEKIN. N3057 carries N-linked (GlcNAc...) asparagine glycosylation. Low complexity predominate over residues 3061-3074; it reads NNQNNQNNNNNNNN.

The protein belongs to the PIEZO (TC 1.A.75) family.

It is found in the membrane. The protein is Protein PIEZO homolog of Dictyostelium discoideum (Social amoeba).